The sequence spans 180 residues: Large ribosomal subunit protein uL6 (180 aa).

Belongs to the universal ribosomal protein uL6 family. Part of the 50S ribosomal subunit.

Functionally, this protein binds to the 23S rRNA, and is important in its secondary structure. It is located near the subunit interface in the base of the L7/L12 stalk, and near the tRNA binding site of the peptidyltransferase center. This is Large ribosomal subunit protein uL6 from Clostridium botulinum (strain Alaska E43 / Type E3).